The chain runs to 103 residues: Small ribosomal subunit protein uS10 (103 aa).

The protein belongs to the universal ribosomal protein uS10 family. As to quaternary structure, part of the 30S ribosomal subunit.

In terms of biological role, involved in the binding of tRNA to the ribosomes. The chain is Small ribosomal subunit protein uS10 from Acetivibrio thermocellus (strain ATCC 27405 / DSM 1237 / JCM 9322 / NBRC 103400 / NCIMB 10682 / NRRL B-4536 / VPI 7372) (Clostridium thermocellum).